The following is a 340-amino-acid chain: Biotin synthase (340 aa).

The Radical SAM core domain occupies 47-269 (SELQLSQLLS…VAVARIVCPK (223 aa)). 3 residues coordinate [4Fe-4S] cluster: Cys62, Cys66, and Cys69. [2Fe-2S] cluster contacts are provided by Cys106, Cys137, Cys197, and Arg273.

It belongs to the radical SAM superfamily. Biotin synthase family. Homodimer. [4Fe-4S] cluster is required as a cofactor. It depends on [2Fe-2S] cluster as a cofactor.

The enzyme catalyses (4R,5S)-dethiobiotin + (sulfur carrier)-SH + 2 reduced [2Fe-2S]-[ferredoxin] + 2 S-adenosyl-L-methionine = (sulfur carrier)-H + biotin + 2 5'-deoxyadenosine + 2 L-methionine + 2 oxidized [2Fe-2S]-[ferredoxin]. The protein operates within cofactor biosynthesis; biotin biosynthesis; biotin from 7,8-diaminononanoate: step 2/2. In terms of biological role, catalyzes the conversion of dethiobiotin (DTB) to biotin by the insertion of a sulfur atom into dethiobiotin via a radical-based mechanism. The polypeptide is Biotin synthase (Caulobacter sp. (strain K31)).